We begin with the raw amino-acid sequence, 373 residues long: AA9 family lytic polysaccharide monooxygenase A (373 aa).

An N-terminal signal peptide occupies residues 1 to 20 (MKSSTFGMLALAAAAKLVSA). Histidine 21 contacts Cu(2+). The segment at 36-55 (EGNSQSGYIRSPPSNSPITD) is disordered. The cysteines at positions 63 and 183 are disulfide-linked. Histidine 102 is a binding site for Cu(2+). 2 residues coordinate O2: histidine 169 and glutamine 178. Position 180 (tyrosine 180) interacts with Cu(2+). Residues 234–333 (GASGSSSSSS…NSVPQPSSNA (100 aa)) form a disordered region. Composition is skewed to low complexity over residues 235 to 262 (ASGS…APSS) and 270 to 323 (PATS…AAPT). A compositionally biased stretch (polar residues) spans 324–333 (NSVPQPSSNA). Residues 335–371 (GAVKEWYQCGGLNYSGSTQCEEGLTCKKWNPYYHQCV) form the CBM1 domain. A glycan (N-linked (GlcNAc...) asparagine) is linked at asparagine 347.

It belongs to the polysaccharide monooxygenase AA9 family. Cu(2+) serves as cofactor.

Its subcellular location is the secreted. It carries out the reaction [(1-&gt;4)-beta-D-glucosyl]n+m + reduced acceptor + O2 = 4-dehydro-beta-D-glucosyl-[(1-&gt;4)-beta-D-glucosyl]n-1 + [(1-&gt;4)-beta-D-glucosyl]m + acceptor + H2O.. Its function is as follows. Lytic polysaccharide monooxygenase (LPMO) that depolymerizes crystalline and amorphous polysaccharides via the oxidation of scissile alpha- or beta-(1-4)-glycosidic bonds, yielding exclusively C4 oxidation products. Catalysis by LPMOs requires the reduction of the active-site copper from Cu(II) to Cu(I) by a reducing agent and H(2)O(2) or O(2) as a cosubstrate. In addition to cellulose, also cleaves the beta-(1!4)-glucan backbone of tamarind xyloglucan, but only next to unsubstituted glucosyl units. This Aspergillus tamarii protein is AA9 family lytic polysaccharide monooxygenase A.